The primary structure comprises 220 residues: Mediator of RNA polymerase II transcription subunit 7 (220 aa).

This sequence belongs to the Mediator complex subunit 7 family. As to quaternary structure, component of the Mediator complex. Interacts with MED21.

Its subcellular location is the nucleus. Component of the Mediator complex, a coactivator involved in the regulated transcription of nearly all RNA polymerase II-dependent genes. Mediator functions as a bridge to convey information from gene-specific regulatory proteins to the basal RNA polymerase II transcription machinery. Mediator is recruited to promoters by direct interactions with regulatory proteins and serves as a scaffold for the assembly of a functional preinitiation complex with RNA polymerase II and the general transcription factors. Required for activated transcription of the MtnA, MtnB and MtnD genes. In Drosophila melanogaster (Fruit fly), this protein is Mediator of RNA polymerase II transcription subunit 7 (MED7).